The sequence spans 609 residues: Tyrosine-protein kinase transforming protein Fes (609 aa).

Disordered stretches follow at residues 1–20 (AARA…PQGH) and 152–208 (RDSA…GGRT). Positions 8-174 (MGFSSELCSP…SKDKDRDKAK (167 aa)) constitute an F-BAR; degenerate domain. Basic and acidic residues-rich tracts occupy residues 160-175 (KYQE…KAKL) and 190-206 (QDDR…REGG). Positions 247–336 (WYHGALPRAE…KSGIVLNRAV (90 aa)) constitute an SH2 domain. The region spanning 348–609 (LVLGEQIGRG…ELQSIRKRHR (262 aa)) is the Protein kinase domain. ATP-binding positions include 354 to 362 (IGRGNFGEV) and Lys377. The Proton acceptor role is filled by Asp470. Tyr500 bears the Phosphotyrosine; by autocatalysis mark.

The protein belongs to the protein kinase superfamily. Tyr protein kinase family. Fes/fps subfamily.

It catalyses the reaction L-tyrosyl-[protein] + ATP = O-phospho-L-tyrosyl-[protein] + ADP + H(+). The protein is Tyrosine-protein kinase transforming protein Fes (V-FES) of Felidae (cat family).